The primary structure comprises 240 residues: Transcription factor bHLH101 (240 aa).

Positions 65 to 117 (EKKLNHNASERDRRRKLNALYSSLRALLPLSDQKRKLSIPMTVARVVKYIPEQ) constitute a bHLH domain.

Homodimer. As to expression, flowers.

Its subcellular location is the nucleus. The protein is Transcription factor bHLH101 (BHLH101) of Arabidopsis thaliana (Mouse-ear cress).